Here is a 419-residue protein sequence, read N- to C-terminus: UPF0229 protein TERTU_3150 (419 aa).

Residues 63 to 111 (IFHHGSGGKNNRVLPGNDRFNGGDHIERPEQGQGGGGNGSGASDSGEGE) form a disordered region. The span at 83-92 (NGGDHIERPE) shows a compositional bias: basic and acidic residues.

Belongs to the UPF0229 family.

In Teredinibacter turnerae (strain ATCC 39867 / T7901), this protein is UPF0229 protein TERTU_3150.